We begin with the raw amino-acid sequence, 302 residues long: Lipoyl synthase (302 aa).

Positions 44, 49, 55, 70, 74, 77, and 283 each coordinate [4Fe-4S] cluster. Residues 56–272 (WSKKHATVMI…ARVAKSKGFL (217 aa)) form the Radical SAM core domain.

Belongs to the radical SAM superfamily. Lipoyl synthase family. It depends on [4Fe-4S] cluster as a cofactor.

It localises to the cytoplasm. The catalysed reaction is [[Fe-S] cluster scaffold protein carrying a second [4Fe-4S](2+) cluster] + N(6)-octanoyl-L-lysyl-[protein] + 2 oxidized [2Fe-2S]-[ferredoxin] + 2 S-adenosyl-L-methionine + 4 H(+) = [[Fe-S] cluster scaffold protein] + N(6)-[(R)-dihydrolipoyl]-L-lysyl-[protein] + 4 Fe(3+) + 2 hydrogen sulfide + 2 5'-deoxyadenosine + 2 L-methionine + 2 reduced [2Fe-2S]-[ferredoxin]. Its pathway is protein modification; protein lipoylation via endogenous pathway; protein N(6)-(lipoyl)lysine from octanoyl-[acyl-carrier-protein]: step 2/2. In terms of biological role, catalyzes the radical-mediated insertion of two sulfur atoms into the C-6 and C-8 positions of the octanoyl moiety bound to the lipoyl domains of lipoate-dependent enzymes, thereby converting the octanoylated domains into lipoylated derivatives. The chain is Lipoyl synthase from Orientia tsutsugamushi (strain Ikeda) (Rickettsia tsutsugamushi).